The sequence spans 161 residues: 3-hydroxyacyl-[acyl-carrier-protein] dehydratase FabZ (161 aa).

His55 is a catalytic residue.

Belongs to the thioester dehydratase family. FabZ subfamily.

It is found in the cytoplasm. The enzyme catalyses a (3R)-hydroxyacyl-[ACP] = a (2E)-enoyl-[ACP] + H2O. In terms of biological role, involved in unsaturated fatty acids biosynthesis. Catalyzes the dehydration of short chain beta-hydroxyacyl-ACPs and long chain saturated and unsaturated beta-hydroxyacyl-ACPs. The chain is 3-hydroxyacyl-[acyl-carrier-protein] dehydratase FabZ from Jannaschia sp. (strain CCS1).